The following is a 139-amino-acid chain: uncharacterized protein (139 aa).

A helical membrane pass occupies residues 43–59 (FGVISTLIAIFIGAFWL).

It localises to the membrane. This is an uncharacterized protein from Haemophilus influenzae (strain ATCC 51907 / DSM 11121 / KW20 / Rd).